The sequence spans 78 residues: Sec-independent protein translocase protein TatA (78 aa).

Residues Met-1–Gly-21 form a helical membrane-spanning segment. Positions Leu-43 to Asp-60 are enriched in basic and acidic residues. The segment at Leu-43–Val-78 is disordered. Positions His-61–Asp-72 are enriched in polar residues.

This sequence belongs to the TatA/E family. In terms of assembly, the Tat system comprises two distinct complexes: a TatABC complex, containing multiple copies of TatA, TatB and TatC subunits, and a separate TatA complex, containing only TatA subunits. Substrates initially bind to the TatABC complex, which probably triggers association of the separate TatA complex to form the active translocon.

Its subcellular location is the cell inner membrane. Functionally, part of the twin-arginine translocation (Tat) system that transports large folded proteins containing a characteristic twin-arginine motif in their signal peptide across membranes. TatA could form the protein-conducting channel of the Tat system. This chain is Sec-independent protein translocase protein TatA, found in Rhodopseudomonas palustris (strain ATCC BAA-98 / CGA009).